Consider the following 250-residue polypeptide: Probable 2' cyclic ADP-D-ribose synthase TcpB (250 aa).

The interval 1 to 46 is disordered; that stretch reads MSKEKQAQSKAHKAQQAISSAKSLSTQKSKMSELERATRDGAAIGK. Residues 14–23 are compositionally biased toward low complexity; the sequence is AQQAISSAKS. A compositionally biased stretch (basic and acidic residues) spans 30 to 39; that stretch reads KMSELERATR. One can recognise a TIR domain in the interval 117-250; that stretch reads EEYDFFISHA…EIAKELHSLI (134 aa). Glu192 is an active-site residue.

In terms of assembly, homodimer. Interacts with host TIRAP. Interacts with host TLR4, abolishes the interaction of host TIRAP with TLR4.

The protein localises to the secreted. Its subcellular location is the host cell membrane. The enzyme catalyses NAD(+) + H2O = ADP-D-ribose + nicotinamide + H(+). The catalysed reaction is NAD(+) = 2'cADPR + nicotinamide + H(+). Its function is as follows. Virulence factor that interferes with host Toll-like receptor 2 (TLR2) signaling, resulting in the reduction of dendritic cell maturation, inhibition of pro-inflammatory cytokine secretion and impaired NF-kappa-B activation in macrophages. Also acts on host TLR4. Binds host lipids. Has NAD(+) hydrolase (NADase) activity, catalyzes cleavage of NAD(+) into ADP-D-ribose (ADPR) and nicotinamide, also generates a cyclization variant of cyclic ADPR (cADPR), termed v-cADPR (probably 2'cADPR). This Brucella abortus (strain 2308) protein is Probable 2' cyclic ADP-D-ribose synthase TcpB.